A 132-amino-acid chain; its full sequence is Transthyretin-like protein 16 (132 aa).

A signal peptide spans 1–19; that stretch reads MRSLVVCLLLAACALECTA. N-linked (GlcNAc...) asparagine glycosylation occurs at Asn23.

This sequence belongs to the nematode transthyretin-like family.

It is found in the secreted. The chain is Transthyretin-like protein 16 (ttr-16) from Caenorhabditis elegans.